Consider the following 445-residue polypeptide: Arginine biosynthesis bifunctional protein ArgJ, mitochondrial (445 aa).

Substrate contacts are provided by threonine 189, lysine 215, threonine 226, glutamate 312, asparagine 440, and serine 445. Catalysis depends on threonine 226, which acts as the Nucleophile.

This sequence belongs to the ArgJ family. As to quaternary structure, heterodimer of an alpha and a beta chain. In terms of processing, the alpha and beta chains are autoproteolytically processed from a single precursor protein within the mitochondrion.

The protein localises to the mitochondrion matrix. The catalysed reaction is N(2)-acetyl-L-ornithine + L-glutamate = N-acetyl-L-glutamate + L-ornithine. It catalyses the reaction L-glutamate + acetyl-CoA = N-acetyl-L-glutamate + CoA + H(+). The protein operates within amino-acid biosynthesis; L-arginine biosynthesis; L-ornithine and N-acetyl-L-glutamate from L-glutamate and N(2)-acetyl-L-ornithine (cyclic): step 1/1. It functions in the pathway amino-acid biosynthesis; L-arginine biosynthesis; N(2)-acetyl-L-ornithine from L-glutamate: step 1/4. Functionally, catalyzes two activities which are involved in the cyclic version of arginine biosynthesis: the synthesis of acetylglutamate from glutamate and acetyl-CoA, and of ornithine by transacetylation between acetylornithine and glutamate. This Schizosaccharomyces pombe (strain 972 / ATCC 24843) (Fission yeast) protein is Arginine biosynthesis bifunctional protein ArgJ, mitochondrial.